We begin with the raw amino-acid sequence, 380 residues long: Succinyl-diaminopimelate desuccinylase (380 aa).

His71 lines the Zn(2+) pocket. Asp73 is a catalytic residue. Asp104 serves as a coordination point for Zn(2+). The active-site Proton acceptor is the Glu138. Zn(2+) contacts are provided by Glu139, Glu167, and His353.

Belongs to the peptidase M20A family. DapE subfamily. Homodimer. It depends on Zn(2+) as a cofactor. Co(2+) is required as a cofactor.

The catalysed reaction is N-succinyl-(2S,6S)-2,6-diaminopimelate + H2O = (2S,6S)-2,6-diaminopimelate + succinate. Its pathway is amino-acid biosynthesis; L-lysine biosynthesis via DAP pathway; LL-2,6-diaminopimelate from (S)-tetrahydrodipicolinate (succinylase route): step 3/3. Functionally, catalyzes the hydrolysis of N-succinyl-L,L-diaminopimelic acid (SDAP), forming succinate and LL-2,6-diaminopimelate (DAP), an intermediate involved in the bacterial biosynthesis of lysine and meso-diaminopimelic acid, an essential component of bacterial cell walls. The protein is Succinyl-diaminopimelate desuccinylase of Shewanella baltica (strain OS185).